The chain runs to 227 residues: Ribose-5-phosphate isomerase A (227 aa).

Substrate is bound by residues 26–29 (TGST), 82–85 (DGAD), and 95–98 (KGGG). The active-site Proton acceptor is the glutamate 104. Lysine 122 contacts substrate.

This sequence belongs to the ribose 5-phosphate isomerase family. As to quaternary structure, homodimer.

It carries out the reaction aldehydo-D-ribose 5-phosphate = D-ribulose 5-phosphate. Its pathway is carbohydrate degradation; pentose phosphate pathway; D-ribose 5-phosphate from D-ribulose 5-phosphate (non-oxidative stage): step 1/1. In terms of biological role, catalyzes the reversible conversion of ribose-5-phosphate to ribulose 5-phosphate. This chain is Ribose-5-phosphate isomerase A, found in Streptococcus pneumoniae serotype 2 (strain D39 / NCTC 7466).